The following is a 225-amino-acid chain: Paired immunoglobulin-like type 2 receptor beta-2 (225 aa).

An N-terminal signal peptide occupies residues 1 to 31 (MALLISLPGETPAMAQILLLLSSACLHAGNS). Topologically, residues 32 to 195 (ARSNGGNDFG…NPSLMNLGAM (164 aa)) are extracellular. 3 N-linked (GlcNAc...) asparagine glycosylation sites follow: asparagine 90, asparagine 107, and asparagine 160. Residues 196-216 (VTMLLAKVVVIILVYGWMIFL) form a helical membrane-spanning segment. Residues 217-225 (RWKQRPDPA) lie on the Cytoplasmic side of the membrane.

It is found in the membrane. In terms of biological role, paired receptors consist of highly related activating and inhibitory receptors and are widely involved in the regulation of the immune system. PILRB2 is probably a cellular signaling activating receptor that associates with ITAM-bearing adapter molecules on the cell surface. This is Paired immunoglobulin-like type 2 receptor beta-2 (Pilrb2) from Mus musculus (Mouse).